A 187-amino-acid polypeptide reads, in one-letter code: Elongation factor P (187 aa).

It belongs to the elongation factor P family.

The protein resides in the cytoplasm. Its pathway is protein biosynthesis; polypeptide chain elongation. Functionally, involved in peptide bond synthesis. Stimulates efficient translation and peptide-bond synthesis on native or reconstituted 70S ribosomes in vitro. Probably functions indirectly by altering the affinity of the ribosome for aminoacyl-tRNA, thus increasing their reactivity as acceptors for peptidyl transferase. The protein is Elongation factor P of Flavobacterium psychrophilum (strain ATCC 49511 / DSM 21280 / CIP 103535 / JIP02/86).